Here is a 353-residue protein sequence, read N- to C-terminus: Protein arginine N-methyltransferase 1 (353 aa).

The 322-residue stretch at 32-353 (KDYYFDSYAH…LSCSTDYRMR (322 aa)) folds into the SAM-dependent MTase PRMT-type domain. S-adenosyl-L-methionine is bound by residues His-45, Arg-54, Gly-78, and Glu-100. At Lys-116 the chain carries N6-succinyllysine. Lys-127 participates in a covalent cross-link: Glycyl lysine isopeptide (Lys-Gly) (interchain with G-Cter in ubiquitin). Glu-129 serves as a coordination point for S-adenosyl-L-methionine. Residues Glu-144 and Glu-153 contribute to the active site. N6-acetyllysine occurs at positions 210 and 215. Ser-286 and Ser-289 each carry phosphoserine.

The protein belongs to the class I-like SAM-binding methyltransferase superfamily. Protein arginine N-methyltransferase family. As to quaternary structure, homodimer and heterodimer with PRMT8. Homooctamer; individual homodimers associates to form a homooctamer. Interacts with NFATC2IP. Interacts with ILF3 and SUPT5H. Individual homodimers can associate to form a homohexamer. Interacts with FOXO1; the interaction methylates FOXO1, retaining it in the nucleus and increasing its transcriptional activity. Methylation of FOXO1 is increased with oxidative stress. Interacts with CHTOP; the interaction methylates CHTOP, enabling its interaction with the 5FMC complex. Interacts with BTG1, BTG2 and IFNAR1. Interacts with and probably methylates ATXN2L. Component of the methylosome, a 20S complex containing at least CLNS1A/pICln, PRMT5/SKB1, WDR77/MEP50, PRMT1 and ERH. Interacts with DHX9 (via RGG region). Interacts (via N-terminus) with HABP4. Interacts with MAP3K5/ASK1; the interaction results in MAP3K5 methylation by PRMT1 which inhibits MAP3K5 activation. Interacts with TRIM48; the interaction results in ubiquitination of PRMT1 by TRIM48, leading to PRMT1 proteasomal degradation and activation of MAP3K5. Interacts with GATOR1 complex; this interaction is S-adenosyl-L-methionine (SAM) dependent and is perturbated by SAMTOR in a SAM-sensitive manner. Interacts with GFI1; promoting recognition and binding of MRE11 and TP53BP1 substrates by PRMT1. Polyubiquitinated at Lys-127 by the SCF(FBXL17) complex, leading to its subsequent degradation. Ubiquitination is regulated by acetylation at Lys-210 and Lys-215. Polyubiquitinated by E3 ubiquitin-protein ligase TRIM48, leading to suppression of MAP3K5/ASK1 methylation and subsequent MAP3K5 activation. Post-translationally, acetylation at Lys-210 and Lys-215 regulates ubiquitination by the SCF(FBXL17) complex. Acetylated at Lys-215 by p300/EP300. Deacetylated at Lys-210 and Lys-215 by SIRT1. In terms of tissue distribution, ubiquitous.

It is found in the nucleus. It localises to the nucleoplasm. The protein resides in the cytoplasm. Its subcellular location is the cytosol. The protein localises to the lysosome membrane. It catalyses the reaction L-arginyl-[protein] + 2 S-adenosyl-L-methionine = N(omega),N(omega)-dimethyl-L-arginyl-[protein] + 2 S-adenosyl-L-homocysteine + 2 H(+). It carries out the reaction L-arginyl-[protein] + S-adenosyl-L-methionine = N(omega)-methyl-L-arginyl-[protein] + S-adenosyl-L-homocysteine + H(+). The enzyme catalyses N(omega)-methyl-L-arginyl-[protein] + S-adenosyl-L-methionine = N(omega),N(omega)-dimethyl-L-arginyl-[protein] + S-adenosyl-L-homocysteine + H(+). Its function is as follows. Arginine methyltransferase that methylates (mono and asymmetric dimethylation) the guanidino nitrogens of arginyl residues present in proteins such as ESR1, histone H2, H3 and H4, FMR1, ILF3, HNRNPA1, HNRNPD, NFATC2IP, SUPT5H, TAF15, EWS, HABP4, SERBP1, RBM15, FOXO1, CHTOP, MAP3K5/ASK1 and MICU1. Constitutes the main enzyme that mediates monomethylation and asymmetric dimethylation of histone H4 'Arg-3' (H4R3me1 and H4R3me2a, respectively), a specific tag for epigenetic transcriptional activation. May be involved in the regulation of TAF15 transcriptional activity, act as an activator of estrogen receptor (ER)-mediated transactivation, play a key role in neurite outgrowth and act as a negative regulator of megakaryocytic differentiation, by modulating p38 MAPK pathway. Methylates RBM15, promoting ubiquitination and degradation of RBM15. Methylates MRE11 and TP53BP1, promoting the DNA damage response. Methylates FOXO1 and retains it in the nucleus increasing its transcriptional activity. Methylates CHTOP and this methylation is critical for its 5-hydroxymethylcytosine (5hmC)-binding activity. Methylates MAP3K5/ASK1 at 'Arg-85' and 'Arg-87' which promotes association of MAP3K5 with thioredoxin and negatively regulates MAP3K5 association with TRAF2, inhibiting MAP3K5 stimulation and MAP3K5-induced activation of JNK. Methylates H4R3 in genes involved in glioblastomagenesis in a CHTOP- and/or TET1-dependent manner. Plays a role in regulating alternative splicing in the heart. Methylates NPRL2 at 'Arg-78' leading to inhibition of its GTPase activator activity and then the GATOR1 complex and consequently inducing timely mTORC1 activation under methionine-sufficient conditions. The polypeptide is Protein arginine N-methyltransferase 1 (Rattus norvegicus (Rat)).